The sequence spans 528 residues: Glucose transporter 1E (528 aa).

The interval 1-22 (MTERRDNVSHAPDAIEGPNDGA) is disordered. The Cytoplasmic portion of the chain corresponds to 1–43 (MTERRDNVSHAPDAIEGPNDGAHAEETSPGFFSFENLGVAQVQ). Residues 44-64 (VVGGTLNGYVIGYVAVYLLLY) form a helical membrane-spanning segment. The Extracellular segment spans residues 65 to 118 (LTATECKFTTEGACGGRKIYGCKWSGTTCKFENPKCSEGSDPSDSCKNEVAYTS). Residues 119–139 (VYSGIFACAMIVGSMVGSIIA) form a helical membrane-spanning segment. The Cytoplasmic portion of the chain corresponds to 140–151 (GKCITTFGLKKS). A helical transmembrane segment spans residues 152–172 (FIIVSITCTIACVVVQVAIEY). Topologically, residues 173-175 (NNY) are extracellular. The chain crosses the membrane as a helical span at residues 176 to 196 (YALCTGRVLIGLGVGILCSVF). At 197 to 213 (PMYVNENAHPKLCKMDG) the chain is on the cytoplasmic side. The chain crosses the membrane as a helical span at residues 214 to 234 (VLFQVFTTLGIMLAAMLGLIL). Topologically, residues 235-250 (DKTGASKEEANMAGRL) are extracellular. The chain crosses the membrane as a helical span at residues 251 to 271 (HVFSAVPLGLSVAMFLVGMFL). At 272-301 (RESTATFAQDDDGKADGGMDPNEYGWGQML) the chain is on the cytoplasmic side. The helical transmembrane segment at 302 to 322 (WPLFMGAVTAGTLQLTGINAV) threads the bilayer. At 323–338 (MNYAPKITENLGMDPS) the chain is on the extracellular side. The chain crosses the membrane as a helical span at residues 339-359 (LGNFLVMAWNFVTSLVAIPLA). The Cytoplasmic segment spans residues 360–367 (SRFTMRQM). A helical transmembrane segment spans residues 368 to 388 (FITCSFVASCMCLFLCGIPVF). The Extracellular segment spans residues 389 to 403 (PGVAEEKVKNGVATT). Residues 404–424 (GIALFIAAFEFGVGSCFFVLA) form a helical membrane-spanning segment. Topologically, residues 425-438 (QDLFPPSFRPKGSS) are cytoplasmic. The helical transmembrane segment at 439–459 (FVVMMQFIFNILINLLYPITT) threads the bilayer. Residues 460 to 475 (EAISGGATGDQDKGQA) are Extracellular-facing. Residues 476–496 (VVFILFGLIGLICFVLQFFYL) form a helical membrane-spanning segment. At 497-528 (YPYDANQDHENDHGTEPVERILSPVDVPTPRN) the chain is on the cytoplasmic side. The segment at 507–528 (NDHGTEPVERILSPVDVPTPRN) is disordered.

The protein belongs to the major facilitator superfamily. Sugar transporter (TC 2.A.1.1) family.

The protein resides in the membrane. In terms of biological role, facilitative glucose transporter. The polypeptide is Glucose transporter 1E (THT1E) (Trypanosoma brucei brucei).